Here is a 183-residue protein sequence, read N- to C-terminus: ATP synthase subunit b, chloroplastic (183 aa).

A helical membrane pass occupies residues 27–49 (LATNLINLTVVVGVLIFFGKGVL).

It belongs to the ATPase B chain family. In terms of assembly, F-type ATPases have 2 components, F(1) - the catalytic core - and F(0) - the membrane proton channel. F(1) has five subunits: alpha(3), beta(3), gamma(1), delta(1), epsilon(1). F(0) has four main subunits: a(1), b(1), b'(1) and c(10-14). The alpha and beta chains form an alternating ring which encloses part of the gamma chain. F(1) is attached to F(0) by a central stalk formed by the gamma and epsilon chains, while a peripheral stalk is formed by the delta, b and b' chains.

It localises to the plastid. The protein localises to the chloroplast thylakoid membrane. Its function is as follows. F(1)F(0) ATP synthase produces ATP from ADP in the presence of a proton or sodium gradient. F-type ATPases consist of two structural domains, F(1) containing the extramembraneous catalytic core and F(0) containing the membrane proton channel, linked together by a central stalk and a peripheral stalk. During catalysis, ATP synthesis in the catalytic domain of F(1) is coupled via a rotary mechanism of the central stalk subunits to proton translocation. Component of the F(0) channel, it forms part of the peripheral stalk, linking F(1) to F(0). This Brachypodium distachyon (Purple false brome) protein is ATP synthase subunit b, chloroplastic.